Consider the following 234-residue polypeptide: ATP synthase subunit a 2 (234 aa).

5 helical membrane-spanning segments follow: residues 20 to 40, 78 to 98, 107 to 127, 169 to 189, and 194 to 214; these read ATLI…WFVT, YLPF…LSVI, SLST…LYGV, VMSG…FFPV, and LGLL…MVFI.

It belongs to the ATPase A chain family. F-type ATPases have 2 components, CF(1) - the catalytic core - and CF(0) - the membrane proton channel. CF(1) has five subunits: alpha(3), beta(3), gamma(1), delta(1), epsilon(1). CF(0) has four main subunits: a, b, b' and c.

The protein resides in the cellular thylakoid membrane. Key component of the proton channel; it plays a direct role in the translocation of protons across the membrane. The chain is ATP synthase subunit a 2 from Acaryochloris marina (strain MBIC 11017).